The following is a 430-amino-acid chain: Glucose-6-phosphate isomerase (430 aa).

Residue glutamate 284 is the Proton donor of the active site. Residues histidine 305 and lysine 420 contribute to the active site.

Belongs to the GPI family.

The protein localises to the cytoplasm. The enzyme catalyses alpha-D-glucose 6-phosphate = beta-D-fructose 6-phosphate. It functions in the pathway carbohydrate biosynthesis; gluconeogenesis. The protein operates within carbohydrate degradation; glycolysis; D-glyceraldehyde 3-phosphate and glycerone phosphate from D-glucose: step 2/4. Functionally, catalyzes the reversible isomerization of glucose-6-phosphate to fructose-6-phosphate. In Mycoplasma pneumoniae (strain ATCC 29342 / M129 / Subtype 1) (Mycoplasmoides pneumoniae), this protein is Glucose-6-phosphate isomerase.